We begin with the raw amino-acid sequence, 798 residues long: Cadherin-20 (798 aa).

The N-terminal stretch at 1–35 is a signal peptide; sequence MWTSGRMSNAKNLFGLGVSLYFWGLMDLTTTVLSG. The propeptide occupies 36–58; sequence SARPLTEGPEDNLSDKLHQRMKR. The N-linked (GlcNAc...) asparagine glycan is linked to Asn-47. Residues 59–618 lie on the Extracellular side of the membrane; sequence SWVWNQFFVL…AYVLPVSLSR (560 aa). Cadherin domains follow at residues 60-164, 165-273, 274-392, 389-493, and 493-615; these read WVWN…EPKF, LDGP…PPRF, PQKH…EPSF, EPSF…APEF, and FARF…LPVS. The short motif at 88-90 is the Cell attachment site element; the sequence is RGD. N-linked (GlcNAc...) asparagine glycosylation is present at Asn-260. N-linked (GlcNAc...) asparagine glycosylation is found at Asn-419, Asn-460, and Asn-541. The helical transmembrane segment at 619–639 threads the bilayer; sequence GALIAILACIFVLLVLVLLIL. The Cytoplasmic segment spans residues 640–798; the sequence is SMRRQRKQPY…GATDSSGALW (159 aa).

In terms of tissue distribution, detected in embryonic spinal cord, in the brachial and lumbar section of motor neurons (at protein level). Detected in ventro-lateral portion of embryonic spinal cord, in the brachial and lumbar section of embryonic motor neurons. Detected in embryonic adductor motor neurons and embryonic dorsal root ganglion. Detected in the caudal half of newly generated somites and in presomitic mesoderm.

The protein localises to the cell membrane. Cadherins are calcium-dependent cell adhesion proteins. They preferentially interact with themselves in a homophilic manner in connecting cells; cadherins may thus contribute to the sorting of heterogeneous cell types. The polypeptide is Cadherin-20 (CDH20) (Gallus gallus (Chicken)).